Consider the following 85-residue polypeptide: HssA/B-like protein 59 (85 aa).

The protein belongs to the hssA/B family.

The polypeptide is HssA/B-like protein 59 (hssl59) (Dictyostelium discoideum (Social amoeba)).